The following is a 121-amino-acid chain: Nitrogen fixation nifHD region GlnB-like protein 2 (121 aa).

The protein belongs to the P(II) protein family.

Functionally, could be involved in the regulation of nitrogen fixation. The protein is Nitrogen fixation nifHD region GlnB-like protein 2 (glnBB) of Methanothermobacter marburgensis (strain ATCC BAA-927 / DSM 2133 / JCM 14651 / NBRC 100331 / OCM 82 / Marburg) (Methanobacterium thermoautotrophicum).